The sequence spans 989 residues: Mediator of RNA polymerase II transcription subunit 24 (989 aa).

Short sequence motifs (LXXLL motif) lie at residues 128-132 (LHWLL), 344-348 (LTPLL), 448-452 (LDLLL), 557-561 (LVALL), 788-792 (LPGLL), and 857-861 (LMRLL). 2 positions are modified to phosphoserine: S862 and S873.

Belongs to the Mediator complex subunit 24 family. As to quaternary structure, component of the Mediator complex, which is composed of MED1, MED4, MED6, MED7, MED8, MED9, MED10, MED11, MED12, MED13, MED13L, MED14, MED15, MED16, MED17, MED18, MED19, MED20, MED21, MED22, MED23, MED24, MED25, MED26, MED27, MED29, MED30, MED31, CCNC, CDK8 and CDC2L6/CDK11. The MED12, MED13, CCNC and CDK8 subunits form a distinct module termed the CDK8 module. Mediator containing the CDK8 module is less active than Mediator lacking this module in supporting transcriptional activation. Individual preparations of the Mediator complex lacking one or more distinct subunits have been variously termed ARC, CRSP, DRIP, PC2, SMCC and TRAP. Interacts with AR. Ubiquitous. Abundant in skeletal muscle, heart and placenta.

Its subcellular location is the nucleus. Component of the Mediator complex, a coactivator involved in the regulated transcription of nearly all RNA polymerase II-dependent genes. Mediator functions as a bridge to convey information from gene-specific regulatory proteins to the basal RNA polymerase II transcription machinery. Mediator is recruited to promoters by direct interactions with regulatory proteins and serves as a scaffold for the assembly of a functional preinitiation complex with RNA polymerase II and the general transcription factors. This Homo sapiens (Human) protein is Mediator of RNA polymerase II transcription subunit 24 (MED24).